Reading from the N-terminus, the 282-residue chain is HTH-type transcriptional activator RhaR (282 aa).

The HTH araC/xylS-type domain maps to 179–277 (DKLITALANS…GMTPSQWRHL (99 aa)). DNA-binding regions (H-T-H motif) lie at residues 196–217 (DAFC…RAQT) and 244–267 (VSEI…TRET).

As to quaternary structure, binds DNA as a dimer.

The protein localises to the cytoplasm. Functionally, activates expression of the rhaSR operon in response to L-rhamnose. The protein is HTH-type transcriptional activator RhaR of Salmonella choleraesuis (strain SC-B67).